Here is a 179-residue protein sequence, read N- to C-terminus: Large ribosomal subunit protein uL5 (179 aa).

Belongs to the universal ribosomal protein uL5 family. Part of the 50S ribosomal subunit; part of the 5S rRNA/L5/L18/L25 subcomplex. Contacts the 5S rRNA and the P site tRNA. Forms a bridge to the 30S subunit in the 70S ribosome.

In terms of biological role, this is one of the proteins that bind and probably mediate the attachment of the 5S RNA into the large ribosomal subunit, where it forms part of the central protuberance. In the 70S ribosome it contacts protein S13 of the 30S subunit (bridge B1b), connecting the 2 subunits; this bridge is implicated in subunit movement. Contacts the P site tRNA; the 5S rRNA and some of its associated proteins might help stabilize positioning of ribosome-bound tRNAs. This is Large ribosomal subunit protein uL5 from Actinobacillus pleuropneumoniae serotype 5b (strain L20).